The chain runs to 278 residues: Anamorsin homolog (278 aa).

The segment at 1-147 (MESVSHLVSN…EIGSSAALPF (147 aa)) is N-terminal SAM-like domain. The linker stretch occupies residues 147–191 (FANKISLGGNSKMETAKMWTLSSQDFVDDDIDIIDENTLIEEDDF). [2Fe-2S] cluster is bound by residues cysteine 204, cysteine 214, cysteine 217, and cysteine 219. A fe-S binding site A region spans residues 204 to 219 (CDSAKKKRKACKNCSC). Cysteine 239, cysteine 242, cysteine 250, and cysteine 253 together coordinate [4Fe-4S] cluster. 2 short sequence motifs (cx2C motif) span residues 239-242 (CGSC) and 250-253 (CSSC). The fe-S binding site B stretch occupies residues 239–253 (CGSCYLGDAFRCSSC).

This sequence belongs to the anamorsin family. As to quaternary structure, monomer. [2Fe-2S] cluster serves as cofactor. It depends on [4Fe-4S] cluster as a cofactor.

The protein resides in the cytoplasm. Its subcellular location is the mitochondrion intermembrane space. Its function is as follows. Component of the cytosolic iron-sulfur (Fe-S) protein assembly (CIA) machinery. Required for the maturation of extramitochondrial Fe-S proteins. Part of an electron transfer chain functioning in an early step of cytosolic Fe-S biogenesis, facilitating the de novo assembly of a [4Fe-4S] cluster on the cytosolic Fe-S scaffold complex. Electrons are transferred from NADPH via a FAD- and FMN-containing diflavin oxidoreductase. Together with the diflavin oxidoreductase, also required for the assembly of the diferric tyrosyl radical cofactor of ribonucleotide reductase (RNR), probably by providing electrons for reduction during radical cofactor maturation in the catalytic small subunit. The protein is Anamorsin homolog of Trichoplax adhaerens (Trichoplax reptans).